Reading from the N-terminus, the 220-residue chain is 6-phosphogluconolactonase (220 aa).

The protein belongs to the glucosamine/galactosamine-6-phosphate isomerase family. 6-phosphogluconolactonase subfamily.

It carries out the reaction 6-phospho-D-glucono-1,5-lactone + H2O = 6-phospho-D-gluconate + H(+). Its pathway is carbohydrate degradation; pentose phosphate pathway; D-ribulose 5-phosphate from D-glucose 6-phosphate (oxidative stage): step 2/3. Hydrolysis of 6-phosphogluconolactone to 6-phosphogluconate. The polypeptide is 6-phosphogluconolactonase (pgl) (Thermotoga maritima (strain ATCC 43589 / DSM 3109 / JCM 10099 / NBRC 100826 / MSB8)).